Consider the following 35-residue polypeptide: Sorbin and SH3 domain-containing protein 1 (35 aa).

The SoHo domain maps to 1 to 8 (LNRDDDSD). Ser-15 is subject to Phosphoserine. In terms of domain architecture, SH3 spans 22-35 (CDDGWFVGTSRRTK).

In terms of assembly, interacts with the long isoform of AFDN and with VCL. AFDN and VCL bind to SORBS1 in a competitive manner and do not form a ternary complex. Interacts with ABL1, CBL, CBLB and INPPL1/SHIP2 through the third SH3 domain. Interaction with ABL1 occurs only after insulin stimulation while this has no effect on the interaction with INPPL1. Interacts with the insulin receptor but dissociates from it following insulin stimulation. Also interacts with SCA7, PTK2/FAK1 and flotillin. Interacts (via SH3 domain 2) with PXN. Interacts (via third SH3 domain) with the Ten-1 ICD form of TENM1; the interaction induces the translocation of SORBS1 to the nucleus. O-glycosylated.

The protein resides in the cell junction. It localises to the adherens junction. The protein localises to the cell membrane. It is found in the cytoplasm. Its subcellular location is the cytoskeleton. The protein resides in the focal adhesion. It localises to the nucleus. The protein localises to the nucleus matrix. Functionally, plays a role in tyrosine phosphorylation of CBL by linking CBL to the insulin receptor. Required for insulin-stimulated glucose transport. Involved in formation of actin stress fibers and focal adhesions. The polypeptide is Sorbin and SH3 domain-containing protein 1 (Rattus norvegicus (Rat)).